The chain runs to 249 residues: Probable transcriptional regulatory protein GOX1679 (249 aa).

This sequence belongs to the TACO1 family.

The protein resides in the cytoplasm. The chain is Probable transcriptional regulatory protein GOX1679 from Gluconobacter oxydans (strain 621H) (Gluconobacter suboxydans).